The following is a 692-amino-acid chain: Polyphosphate kinase (692 aa).

Asparagine 57 serves as a coordination point for ATP. Positions 383 and 413 each coordinate Mg(2+). The active-site Phosphohistidine intermediate is histidine 443. The ATP site is built by tyrosine 476, arginine 572, and histidine 600.

Belongs to the polyphosphate kinase 1 (PPK1) family. Mg(2+) is required as a cofactor. Post-translationally, an intermediate of this reaction is the autophosphorylated ppk in which a phosphate is covalently linked to a histidine residue through a N-P bond.

It carries out the reaction [phosphate](n) + ATP = [phosphate](n+1) + ADP. In terms of biological role, catalyzes the reversible transfer of the terminal phosphate of ATP to form a long-chain polyphosphate (polyP). The chain is Polyphosphate kinase from Acinetobacter baumannii (strain AYE).